The primary structure comprises 578 residues: Sulfite reductase [NADPH] hemoprotein beta-component (578 aa).

4 residues coordinate [4Fe-4S] cluster: Cys-441, Cys-447, Cys-487, and Cys-491. Cys-491 serves as a coordination point for siroheme.

The protein belongs to the nitrite and sulfite reductase 4Fe-4S domain family. In terms of assembly, alpha(8)-beta(8). The alpha component is a flavoprotein, the beta component is a hemoprotein. Requires siroheme as cofactor. [4Fe-4S] cluster serves as cofactor.

The enzyme catalyses hydrogen sulfide + 3 NADP(+) + 3 H2O = sulfite + 3 NADPH + 4 H(+). Its pathway is sulfur metabolism; hydrogen sulfide biosynthesis; hydrogen sulfide from sulfite (NADPH route): step 1/1. In terms of biological role, component of the sulfite reductase complex that catalyzes the 6-electron reduction of sulfite to sulfide. This is one of several activities required for the biosynthesis of L-cysteine from sulfate. The chain is Sulfite reductase [NADPH] hemoprotein beta-component from Vibrio vulnificus (strain YJ016).